Consider the following 465-residue polypeptide: Probable Xaa-Pro aminopeptidase pepP (465 aa).

D261, D272, E395, and E435 together coordinate Mn(2+).

The protein belongs to the peptidase M24B family. It depends on Mn(2+) as a cofactor.

The catalysed reaction is Release of any N-terminal amino acid, including proline, that is linked to proline, even from a dipeptide or tripeptide.. Catalyzes the removal of a penultimate prolyl residue from the N-termini of peptides. The protein is Probable Xaa-Pro aminopeptidase pepP (pepP) of Talaromyces marneffei (strain ATCC 18224 / CBS 334.59 / QM 7333) (Penicillium marneffei).